Consider the following 137-residue polypeptide: Nucleoside diphosphate kinase (137 aa).

The ATP site is built by Lys9, Phe57, Arg85, Thr91, Arg102, and Asn112. His115 (pros-phosphohistidine intermediate) is an active-site residue.

The protein belongs to the NDK family. Homotetramer. It depends on Mg(2+) as a cofactor.

Its subcellular location is the cytoplasm. It catalyses the reaction a 2'-deoxyribonucleoside 5'-diphosphate + ATP = a 2'-deoxyribonucleoside 5'-triphosphate + ADP. It carries out the reaction a ribonucleoside 5'-diphosphate + ATP = a ribonucleoside 5'-triphosphate + ADP. In terms of biological role, major role in the synthesis of nucleoside triphosphates other than ATP. The ATP gamma phosphate is transferred to the NDP beta phosphate via a ping-pong mechanism, using a phosphorylated active-site intermediate. The chain is Nucleoside diphosphate kinase from Wolinella succinogenes (strain ATCC 29543 / DSM 1740 / CCUG 13145 / JCM 31913 / LMG 7466 / NCTC 11488 / FDC 602W) (Vibrio succinogenes).